The following is a 604-amino-acid chain: Glutamine--fructose-6-phosphate aminotransferase [isomerizing] (604 aa).

Cys2 serves as the catalytic Nucleophile; for GATase activity. Positions 2 to 218 (CGIVGVVGNR…DKELVILTKD (217 aa)) constitute a Glutamine amidotransferase type-2 domain. SIS domains are found at residues 284 to 423 (IITS…ANGK) and 456 to 594 (VQAL…VDKP). The active-site For Fru-6P isomerization activity is Lys599.

In terms of assembly, homodimer.

The protein resides in the cytoplasm. It carries out the reaction D-fructose 6-phosphate + L-glutamine = D-glucosamine 6-phosphate + L-glutamate. Its function is as follows. Catalyzes the first step in hexosamine metabolism, converting fructose-6P into glucosamine-6P using glutamine as a nitrogen source. This chain is Glutamine--fructose-6-phosphate aminotransferase [isomerizing], found in Streptococcus pyogenes serotype M1.